We begin with the raw amino-acid sequence, 619 residues long: Long-chain fatty acid transport protein 6 (619 aa).

2 helical membrane-spanning segments follow: residues 22–42 (LLFPYFWDDFWYLLKVVRYGI) and 119–139 (VHVWFGLAKLGCVVAFLNSNL). 221–232 (YIFTSGTTGLPK) contacts AMP.

Belongs to the ATP-dependent AMP-binding enzyme family.

The protein localises to the cell membrane. The protein resides in the sarcolemma. The enzyme catalyses a fatty acid(in) = a fatty acid(out). It carries out the reaction hexadecanoate(out) = hexadecanoate(in). The catalysed reaction is (9Z,12Z)-octadecadienoate(out) = (9Z,12Z)-octadecadienoate(in). It catalyses the reaction (9Z)-octadecenoate(out) = (9Z)-octadecenoate(in). The enzyme catalyses a very long-chain fatty acid + ATP + CoA = a very long-chain fatty acyl-CoA + AMP + diphosphate. It carries out the reaction tetracosanoate + ATP + CoA = tetracosanoyl-CoA + AMP + diphosphate. The catalysed reaction is a long-chain fatty acid + ATP + CoA = a long-chain fatty acyl-CoA + AMP + diphosphate. It catalyses the reaction (9Z)-octadecenoate + ATP + CoA = (9Z)-octadecenoyl-CoA + AMP + diphosphate. The enzyme catalyses (5Z,8Z,11Z,14Z)-eicosatetraenoate + ATP + CoA = (5Z,8Z,11Z,14Z)-eicosatetraenoyl-CoA + AMP + diphosphate. Functionally, mediates the import of long-chain fatty acids (LCFA) into the cell by facilitating their transport at the plasma membrane. Also functions as an acyl-CoA ligase catalyzing the ATP-dependent formation of fatty acyl-CoA using LCFA and very-long-chain fatty acids (VLCFA) as substrates. Plays a pivotal role in regulating available LCFA substrates from exogenous sources in tissues undergoing high levels of beta-oxidation such as the heart. The polypeptide is Long-chain fatty acid transport protein 6 (Slc27a6) (Mus musculus (Mouse)).